A 416-amino-acid chain; its full sequence is Serine hydroxymethyltransferase (416 aa).

(6S)-5,6,7,8-tetrahydrofolate contacts are provided by residues Leu-118 and 122–124; that span reads GHL. Lys-226 is subject to N6-(pyridoxal phosphate)lysine. 350 to 352 contacts (6S)-5,6,7,8-tetrahydrofolate; it reads SPF.

This sequence belongs to the SHMT family. As to quaternary structure, homodimer. Requires pyridoxal 5'-phosphate as cofactor.

The protein localises to the cytoplasm. The catalysed reaction is (6R)-5,10-methylene-5,6,7,8-tetrahydrofolate + glycine + H2O = (6S)-5,6,7,8-tetrahydrofolate + L-serine. Its pathway is one-carbon metabolism; tetrahydrofolate interconversion. It functions in the pathway amino-acid biosynthesis; glycine biosynthesis; glycine from L-serine: step 1/1. Functionally, catalyzes the reversible interconversion of serine and glycine with tetrahydrofolate (THF) serving as the one-carbon carrier. This reaction serves as the major source of one-carbon groups required for the biosynthesis of purines, thymidylate, methionine, and other important biomolecules. Also exhibits THF-independent aldolase activity toward beta-hydroxyamino acids, producing glycine and aldehydes, via a retro-aldol mechanism. The protein is Serine hydroxymethyltransferase of Sulfurovum sp. (strain NBC37-1).